Here is a 1381-residue protein sequence, read N- to C-terminus: MANNTTSALHPRGSGQRCVYDTVLRFGDPDARRRGFQLDEVSHNKLCDIFDSGPLHFAFGDLKVMKVAGGVVTPHKTVVKTVYVSGVQEGNDYVTFAFTPGPNEWREVDPRIDKRTALVGVLVQEHKKLDSDLKESRRELSQLKLEHSLLRHDYERLVREKPGPAMRTFKFSAVIFYAFFLGFLLMSAVKGEVYGRCLDSELNLNGNPEVCLHWEEVKSFSLQVALADFWNMTLDYYATVAPQSPLMDLALGYFPYFANWHMAAFLVGTAHVVAAERPLYMLVTLVLATLSRFQLVALAAVPMLDMPSSIGLWVTMVLFAIDQAFAILASVLISVLLLILCLAMNDVDYGALLRGCVTLVSATVFSHLVSFLHAPGWFTIIAILIYRIPKVLSYVSAERVDIKGPDGKIKETQNANPSWITKMSGLKNFFQRAFRQKVRTGVNPTTRIIPNSLVVIDAKDGRGTGFRVRNYLVTAGHVVGADTTVRVRWADVTSFAHVVYRVPNKDIVLLTLPAEYNSLHSYKLAKEVVDGTVVVVSNGDGGALSVGISEGVIVGESMTYAINTADGMSGSPLTTTDGRLIGVHQQNTGFTGGAVIFRDTDFPQPKKPQREADLEAKVAELEKALAAYTQSATGEDIVGLVRVAIQREMEVLRKELSNEFGQAKGKTKHKRRIMAAARSGGKRKPGKVWTEEEYKKLLEEGFTRDQLREMAEAAREADDDFDDYEEEKNEVDYPVWSDHDSDEEIDRDWFGQNLPTWSSAWSDFEPELDPDVTKTLPCHLEDKFSLKHYIITEADLKHFGQEMKEYMDHLDAVIKTHTEKGKWCPNTNTEEILKDLNAMWFKLNHTMWKNGVAPFMQRKKQKPKKREEGPERGPINPDEMRLDHWEKMMAPPDAGRRLVPDDYPVIGKLPINRPISDWDEPVDDLLNLLPPAPDSSAYGPAVWGPEAYVKSFEKFTYAKPRDSIKRDFPREWKFACQVLRREFDFLEGSVIMDITATSKNADSTCAYPKCNYWKTEAEYLSERGYQDYVSEYKRIHGGARPKVLWLLFLKKEILKVKKINDSDIRQIVCADPIFARIGNAFEEHQNTLMKHRTATRMPQCGWTPFFNGFKRRIERLLSRKNSVFIEFDWTRYDGTIPREIFAKIKSFRFSCLAEEFQTDANRAMYQWYCDSLLDRYVLMPSGEVTRQTKGNPSGQISTTMDNNLCNVFFQAFEYAYIHPEKSIEELRESWDRCDSLIYGDDRLTTFDHVPPDYVDRVVHMYKDVFGMWVKPEKVIVSDTPVGLSFCGFTVGPDLMPVPTDCDKLVASLVTPTKKLQDIVALYSKVLCYRILGHNLSDEHEFKRYVRVALEVLARHIRNLGGEEPVHVTERLLDKLWRGGPK.

Residues 121–160 (VLVQEHKKLDSDLKESRRELSQLKLEHSLLRHDYERLVRE) adopt a coiled-coil conformation. 5 helical membrane passes run 169 to 189 (FKFS…MSAV), 249 to 269 (LALG…LVGT), 279 to 299 (LYML…VALA), 324 to 344 (AFAI…CLAM), and 365 to 385 (FSHL…AILI). Active-site charge relay system; for serine protease activity residues include His477, Asp506, and Ser569. Tyr694 carries the O-(5'-phospho-RNA)-tyrosine modification. A coiled-coil region spans residues 703–732 (TRDQLREMAEAAREADDDFDDYEEEKNEVD). A disordered region spans residues 856–879 (MQRKKQKPKKREEGPERGPINPDE). The 133-residue stretch at 1122–1254 (SVFIEFDWTR…TFDHVPPDYV (133 aa)) folds into the RdRp catalytic domain.

Belongs to the astroviridae polyprotein 1AB family. Monomer. Cleaved by the viral and host proteases. The protease is probably autocatalytically cleaved.

It localises to the host membrane. The catalysed reaction is RNA(n) + a ribonucleoside 5'-triphosphate = RNA(n+1) + diphosphate. Responsible for the cleavage of the polyprotein into functional products. Functionally, protein covalently attached to the 5' extremity of the genomic and subgenomic RNAs. It may serve as a primer for the replicase. The chain is Non-structural polyprotein 1AB (ORF1) from Neovison vison (American mink).